A 388-amino-acid polypeptide reads, in one-letter code: Succinate--CoA ligase [ADP-forming] subunit beta (388 aa).

Positions 9–244 (KQLFAEYGLP…PSQEDSREAE (236 aa)) constitute an ATP-grasp domain. ATP-binding positions include lysine 46, 53-55 (GRG), glutamate 99, threonine 102, and glutamate 107. Asparagine 199 and aspartate 213 together coordinate Mg(2+). Residues asparagine 264 and 321–323 (GIV) contribute to the substrate site.

It belongs to the succinate/malate CoA ligase beta subunit family. Heterotetramer of two alpha and two beta subunits. Requires Mg(2+) as cofactor.

It catalyses the reaction succinate + ATP + CoA = succinyl-CoA + ADP + phosphate. It carries out the reaction GTP + succinate + CoA = succinyl-CoA + GDP + phosphate. The protein operates within carbohydrate metabolism; tricarboxylic acid cycle; succinate from succinyl-CoA (ligase route): step 1/1. In terms of biological role, succinyl-CoA synthetase functions in the citric acid cycle (TCA), coupling the hydrolysis of succinyl-CoA to the synthesis of either ATP or GTP and thus represents the only step of substrate-level phosphorylation in the TCA. The beta subunit provides nucleotide specificity of the enzyme and binds the substrate succinate, while the binding sites for coenzyme A and phosphate are found in the alpha subunit. The protein is Succinate--CoA ligase [ADP-forming] subunit beta of Marinobacter nauticus (strain ATCC 700491 / DSM 11845 / VT8) (Marinobacter aquaeolei).